A 70-amino-acid polypeptide reads, in one-letter code: MVYQSRSFQVEVSGLHQNEVTNQNNYPIRSSGSVFITIPFSRFNEELQRINRLGGKIVNIQPLNLQINEN.

Residues 5–63 enclose the CpcD-like domain; sequence SRSFQVEVSGLHQNEVTNQNNYPIRSSGSVFITIPFSRFNEELQRINRLGGKIVNIQPL.

This sequence belongs to the phycobilisome linker protein family.

It is found in the cellular thylakoid membrane. Functionally, rod linker protein, associated with phycocyanin. Linker polypeptides determine the state of aggregation and the location of the disk-shaped phycobiliprotein units within the phycobilisome and modulate their spectroscopic properties in order to mediate a directed and optimal energy transfer. The polypeptide is Phycobilisome 8.1 kDa linker polypeptide, phycocyanin-associated, rod (cpcD3) (Microchaete diplosiphon (Fremyella diplosiphon)).